Reading from the N-terminus, the 339-residue chain is Glycerol-3-phosphate dehydrogenase [NAD(P)+] (339 aa).

Residues S15, Y16, H36, and K110 each coordinate NADPH. 3 residues coordinate sn-glycerol 3-phosphate: K110, G139, and T141. A143 lines the NADPH pocket. Sn-glycerol 3-phosphate is bound by residues K195, D248, S258, R259, and N260. K195 (proton acceptor) is an active-site residue. R259 contacts NADPH. Residues V283 and E285 each coordinate NADPH.

Belongs to the NAD-dependent glycerol-3-phosphate dehydrogenase family.

It is found in the cytoplasm. It carries out the reaction sn-glycerol 3-phosphate + NAD(+) = dihydroxyacetone phosphate + NADH + H(+). The catalysed reaction is sn-glycerol 3-phosphate + NADP(+) = dihydroxyacetone phosphate + NADPH + H(+). Its pathway is membrane lipid metabolism; glycerophospholipid metabolism. In terms of biological role, catalyzes the reduction of the glycolytic intermediate dihydroxyacetone phosphate (DHAP) to sn-glycerol 3-phosphate (G3P), the key precursor for phospholipid synthesis. The sequence is that of Glycerol-3-phosphate dehydrogenase [NAD(P)+] from Erwinia tasmaniensis (strain DSM 17950 / CFBP 7177 / CIP 109463 / NCPPB 4357 / Et1/99).